A 265-amino-acid chain; its full sequence is uncharacterized protein (265 aa).

The helical; Signal-anchor for type II membrane protein transmembrane segment at 3 to 23 (KKTWVYIIIAIIIILLLVWYF) threads the bilayer. 2 N-linked (GlcNAc...) asparagine; by host glycosylation sites follow: N37 and N125. Residues 37–94 (NQTYNMLQQQISSLNQQILFLKQQISNLHVPAPTSTVNSLRQTVSDINQQVSTINNQI) are a coiled coil. Positions 158–257 (NVADNELNVL…KNSLGSAVRN (100 aa)) form a coiled coil.

It localises to the host membrane. The protein localises to the virion. This is an uncharacterized protein from Acanthamoeba polyphaga (Amoeba).